The sequence spans 734 residues: MASRFPKFSQGLAQDPTTRRIWFGIATAHHFESHDDITEERLYHKIFASHFGQLAIIFLWTSGNLFHVAWQGNFEAWVRDPLHVRPIAHAIWDPHFGQPAIEAFTRGGAPGPVNIAYSGVYQWWYTIGLRTNEDLYAGALFLLFLSVIFLIAGRLHLQPKWRPSVSWFKNAESRLNHHLSGLFGVSSLAWTGHLVHVAIPESRGVHVRWDNFLDVLPHPEGLEPLFTGQWNLYAQNPDSSSHLFGTSQGAGTAILTFLGGFHPQTQSLWLTDMAHHHLAIALVFSIAGHMYRTNFGIGHSMEDILEAHVPPGGLLGRGHKGLYNTINNSLHFQLGLALASLGVITSLVAQHMYSLPPYAFIAQDFTTQAALYTHHQYIAGFIMTGAFAHGAIFLIRDYNPEQNKDNVLARMLEQKEAIISHLSWVSLLLGFHTLGLYVHNDVMLAFGTPEKQILIEPIFAQWIQSAHGKTLYGFDILLSSTSGPSFDAGKSIWLPGWLNAINDNNNSLFSTIGPGDFLVHHAIALGLHTTTLILVKGALDARGSRLMPDKKDFGYSFPCDGPGRGGTCDISAWDAFYLAVFWMLNTIGWVTFYWHWKHITLWQGNVAQFNESSTYLMGWSRDYLWLNSSQLINGYNPFGMNSLSVWAWMFLFGHLVWATGFMFLISWRGYWQELIETLAWAHERTPLANLVRWRDKPVALSIVQARLVGLAHFSVGYIFTYAAFLIASTSGKFG.

The next 8 membrane-spanning stretches (helical) occupy residues 46–69 (IFAS…FHVA), 135–158 (LYAG…LHLQ), 175–199 (LNHH…HVAI), 273–291 (MAHH…GHMY), 330–353 (LHFQ…QHMY), 369–395 (AALY…IFLI), 417–439 (AIIS…LYVH), and 517–535 (FLVH…LILV). The [4Fe-4S] cluster site is built by cysteine 559 and cysteine 568. The next 2 membrane-spanning stretches (helical) occupy residues 575-596 (AFYL…YWHW) and 643-665 (LSVW…MFLI). Residues histidine 654, methionine 662, and tyrosine 670 each contribute to the chlorophyll a site. A phylloquinone-binding site is contributed by tryptophan 671. Residues 707 to 727 (LVGLAHFSVGYIFTYAAFLIA) traverse the membrane as a helical segment.

The protein belongs to the PsaA/PsaB family. The PsaA/B heterodimer binds the P700 chlorophyll special pair and subsequent electron acceptors. PSI consists of a core antenna complex that captures photons, and an electron transfer chain that converts photonic excitation into a charge separation. The eukaryotic PSI reaction center is composed of at least 11 subunits. Requires P700 is a chlorophyll a/chlorophyll a' dimer, A0 is one or more chlorophyll a, A1 is one or both phylloquinones and FX is a shared 4Fe-4S iron-sulfur center. as cofactor.

It localises to the plastid. It is found in the chloroplast thylakoid membrane. It carries out the reaction reduced [plastocyanin] + hnu + oxidized [2Fe-2S]-[ferredoxin] = oxidized [plastocyanin] + reduced [2Fe-2S]-[ferredoxin]. Functionally, psaA and PsaB bind P700, the primary electron donor of photosystem I (PSI), as well as the electron acceptors A0, A1 and FX. PSI is a plastocyanin-ferredoxin oxidoreductase, converting photonic excitation into a charge separation, which transfers an electron from the donor P700 chlorophyll pair to the spectroscopically characterized acceptors A0, A1, FX, FA and FB in turn. Oxidized P700 is reduced on the lumenal side of the thylakoid membrane by plastocyanin. The chain is Photosystem I P700 chlorophyll a apoprotein A2 from Pinus thunbergii (Japanese black pine).